A 388-amino-acid chain; its full sequence is Chorismate synthase (388 aa).

NADP(+) is bound by residues Arg-39 and Arg-45. FMN-binding positions include 130 to 132, 251 to 252, Gly-296, 311 to 315, and Arg-337; these read RSS, NA, and KPIPT.

It belongs to the chorismate synthase family. Homotetramer. FMNH2 serves as cofactor.

The enzyme catalyses 5-O-(1-carboxyvinyl)-3-phosphoshikimate = chorismate + phosphate. Its pathway is metabolic intermediate biosynthesis; chorismate biosynthesis; chorismate from D-erythrose 4-phosphate and phosphoenolpyruvate: step 7/7. In terms of biological role, catalyzes the anti-1,4-elimination of the C-3 phosphate and the C-6 proR hydrogen from 5-enolpyruvylshikimate-3-phosphate (EPSP) to yield chorismate, which is the branch point compound that serves as the starting substrate for the three terminal pathways of aromatic amino acid biosynthesis. This reaction introduces a second double bond into the aromatic ring system. This is Chorismate synthase from Lactococcus lactis subsp. cremoris (strain SK11).